We begin with the raw amino-acid sequence, 149 residues long: D-aminoacyl-tRNA deacylase (149 aa).

The Gly-cisPro motif, important for rejection of L-amino acids motif lies at 137-138 (GP).

The protein belongs to the DTD family. As to quaternary structure, homodimer.

Its subcellular location is the cytoplasm. The catalysed reaction is glycyl-tRNA(Ala) + H2O = tRNA(Ala) + glycine + H(+). It carries out the reaction a D-aminoacyl-tRNA + H2O = a tRNA + a D-alpha-amino acid + H(+). Functionally, an aminoacyl-tRNA editing enzyme that deacylates mischarged D-aminoacyl-tRNAs. Also deacylates mischarged glycyl-tRNA(Ala), protecting cells against glycine mischarging by AlaRS. Acts via tRNA-based rather than protein-based catalysis; rejects L-amino acids rather than detecting D-amino acids in the active site. By recycling D-aminoacyl-tRNA to D-amino acids and free tRNA molecules, this enzyme counteracts the toxicity associated with the formation of D-aminoacyl-tRNA entities in vivo and helps enforce protein L-homochirality. This Clostridium botulinum (strain Eklund 17B / Type B) protein is D-aminoacyl-tRNA deacylase.